The following is a 200-amino-acid chain: Cell division protein SepF (200 aa).

Disordered stretches follow at residues 35–60 (NLYQQENPQPPAPQESATAQNRRWRE) and 170–200 (LHEVPQPPARPSRPTGSPNQTWGNETNRMAQ). Residues 183 to 200 (PTGSPNQTWGNETNRMAQ) are compositionally biased toward polar residues.

It belongs to the SepF family. As to quaternary structure, homodimer. Interacts with FtsZ.

The protein resides in the cytoplasm. Cell division protein that is part of the divisome complex and is recruited early to the Z-ring. Probably stimulates Z-ring formation, perhaps through the cross-linking of FtsZ protofilaments. Its function overlaps with FtsA. The polypeptide is Cell division protein SepF (Nostoc punctiforme (strain ATCC 29133 / PCC 73102)).